The following is a 398-amino-acid chain: RNA exonuclease 3 (398 aa).

Positions 239–385 (VLALDCEMGF…QDAIAAMDII (147 aa)) constitute an Exonuclease domain.

This sequence belongs to the REXO1/REXO3 family.

It is found in the cytoplasm. The protein localises to the nucleus. 3' to 5' exoribonuclease required for proper 3' end maturation of MRP RNA and of the U5L snRNA. The sequence is that of RNA exonuclease 3 (REX3) from Candida glabrata (strain ATCC 2001 / BCRC 20586 / JCM 3761 / NBRC 0622 / NRRL Y-65 / CBS 138) (Yeast).